The following is an 83-amino-acid chain: Small cysteine-rich protein 3 (83 aa).

Positions 1–21 (MGVKLNICLLLLLVAIISSQG) are cleaved as a signal peptide. Positions 22–39 (FNLRKKEDSKDEKPFGNY) are excised as a propeptide. A compositionally biased stretch (basic and acidic residues) spans 25–35 (RKKEDSKDEKP). The segment at 25–44 (RKKEDSKDEKPFGNYRRGSP) is disordered.

This sequence belongs to the Cnidaria small cysteine-rich protein (SCRiP) family. alpha subfamily. Contains 4 disulfide bonds.

It localises to the secreted. Its subcellular location is the nematocyst. Functionally, this recombinant protein induces severe neurotoxicity on zebrafish larvae (Danio rerio) at a concentration of 230 mg/ml, but does not show toxicity when injected in blowfly larvae (Sarcophaga falculata). All fish incubated with this protein died within 16 hours of exposure. Has also been claimed to be implied in calcification, but this function seems improbable. The protein is Small cysteine-rich protein 3 of Acropora millepora (Staghorn coral).